Reading from the N-terminus, the 467-residue chain is Asparagine--tRNA ligase (467 aa).

This sequence belongs to the class-II aminoacyl-tRNA synthetase family. Homodimer.

The protein localises to the cytoplasm. The catalysed reaction is tRNA(Asn) + L-asparagine + ATP = L-asparaginyl-tRNA(Asn) + AMP + diphosphate + H(+). This chain is Asparagine--tRNA ligase, found in Bacteroides fragilis (strain YCH46).